Reading from the N-terminus, the 802-residue chain is Phenylalanine--tRNA ligase beta subunit (802 aa).

One can recognise a tRNA-binding domain in the interval lysine 38–alanine 149. A B5 domain is found at histidine 399 to proline 474. Aspartate 452, aspartate 458, glutamate 461, and glutamate 462 together coordinate Mg(2+). In terms of domain architecture, FDX-ACB spans serine 708 to arginine 801.

This sequence belongs to the phenylalanyl-tRNA synthetase beta subunit family. Type 1 subfamily. In terms of assembly, tetramer of two alpha and two beta subunits. Requires Mg(2+) as cofactor.

It localises to the cytoplasm. It carries out the reaction tRNA(Phe) + L-phenylalanine + ATP = L-phenylalanyl-tRNA(Phe) + AMP + diphosphate + H(+). This is Phenylalanine--tRNA ligase beta subunit from Mesorhizobium japonicum (strain LMG 29417 / CECT 9101 / MAFF 303099) (Mesorhizobium loti (strain MAFF 303099)).